The following is a 219-amino-acid chain: Ribose-5-phosphate isomerase A (219 aa).

Substrate-binding positions include 28–31 (SGST), 81–84 (DGAD), and 94–97 (KGGG). Glutamate 103 serves as the catalytic Proton acceptor. Substrate is bound at residue lysine 121.

This sequence belongs to the ribose 5-phosphate isomerase family. Homodimer.

The enzyme catalyses aldehydo-D-ribose 5-phosphate = D-ribulose 5-phosphate. It functions in the pathway carbohydrate degradation; pentose phosphate pathway; D-ribose 5-phosphate from D-ribulose 5-phosphate (non-oxidative stage): step 1/1. Its function is as follows. Catalyzes the reversible conversion of ribose-5-phosphate to ribulose 5-phosphate. The polypeptide is Ribose-5-phosphate isomerase A (Glaesserella parasuis serovar 5 (strain SH0165) (Haemophilus parasuis)).